Consider the following 322-residue polypeptide: uncharacterized protein (322 aa).

The protein to M.jannaschii MJ0640 and MJ0799.

This is an uncharacterized protein from Synechocystis sp. (strain ATCC 27184 / PCC 6803 / Kazusa).